The primary structure comprises 522 residues: Protein nucleotidyltransferase YdiU (522 aa).

ATP is bound by residues Gly-109, Gly-111, Arg-112, Lys-132, Asp-144, Gly-145, Arg-195, and Arg-202. Asp-271 (proton acceptor) is an active-site residue. Residues Asn-272 and Asp-281 each contribute to the Mg(2+) site. Asp-281 is an ATP binding site.

This sequence belongs to the SELO family. Requires Mg(2+) as cofactor. The cofactor is Mn(2+).

The enzyme catalyses L-seryl-[protein] + ATP = 3-O-(5'-adenylyl)-L-seryl-[protein] + diphosphate. It catalyses the reaction L-threonyl-[protein] + ATP = 3-O-(5'-adenylyl)-L-threonyl-[protein] + diphosphate. It carries out the reaction L-tyrosyl-[protein] + ATP = O-(5'-adenylyl)-L-tyrosyl-[protein] + diphosphate. The catalysed reaction is L-histidyl-[protein] + UTP = N(tele)-(5'-uridylyl)-L-histidyl-[protein] + diphosphate. The enzyme catalyses L-seryl-[protein] + UTP = O-(5'-uridylyl)-L-seryl-[protein] + diphosphate. It catalyses the reaction L-tyrosyl-[protein] + UTP = O-(5'-uridylyl)-L-tyrosyl-[protein] + diphosphate. Its function is as follows. Nucleotidyltransferase involved in the post-translational modification of proteins. It can catalyze the addition of adenosine monophosphate (AMP) or uridine monophosphate (UMP) to a protein, resulting in modifications known as AMPylation and UMPylation. The chain is Protein nucleotidyltransferase YdiU from Burkholderia ambifaria (strain ATCC BAA-244 / DSM 16087 / CCUG 44356 / LMG 19182 / AMMD) (Burkholderia cepacia (strain AMMD)).